Reading from the N-terminus, the 195-residue chain is Holliday junction branch migration complex subunit RuvA (195 aa).

A domain I region spans residues 1–66 (MNYLIFKVIY…LIIKDLYGFR (66 aa)). The interval 67–141 (TYNERLLFID…KYINKVNDKN (75 aa)) is domain II. Asparagine 141 is a region of interest (flexible linker). The segment at 141 to 195 (NNWAKELSIGLENLGYTKKDIEYAITKVKINSQQDIDISEIISSAIKEISLRHEN) is domain III.

This sequence belongs to the RuvA family. In terms of assembly, homotetramer. Forms an RuvA(8)-RuvB(12)-Holliday junction (HJ) complex. HJ DNA is sandwiched between 2 RuvA tetramers; dsDNA enters through RuvA and exits via RuvB. An RuvB hexamer assembles on each DNA strand where it exits the tetramer. Each RuvB hexamer is contacted by two RuvA subunits (via domain III) on 2 adjacent RuvB subunits; this complex drives branch migration. In the full resolvosome a probable DNA-RuvA(4)-RuvB(12)-RuvC(2) complex forms which resolves the HJ.

It is found in the cytoplasm. Functionally, the RuvA-RuvB-RuvC complex processes Holliday junction (HJ) DNA during genetic recombination and DNA repair, while the RuvA-RuvB complex plays an important role in the rescue of blocked DNA replication forks via replication fork reversal (RFR). RuvA specifically binds to HJ cruciform DNA, conferring on it an open structure. The RuvB hexamer acts as an ATP-dependent pump, pulling dsDNA into and through the RuvAB complex. HJ branch migration allows RuvC to scan DNA until it finds its consensus sequence, where it cleaves and resolves the cruciform DNA. The polypeptide is Holliday junction branch migration complex subunit RuvA (Ureaplasma parvum serovar 3 (strain ATCC 27815 / 27 / NCTC 11736)).